Reading from the N-terminus, the 188-residue chain is Putative manganese efflux pump MntP (188 aa).

The next 6 helical transmembrane spans lie at 3–23, 35–55, 63–83, 104–126, 140–160, and 167–187; these read FYAL…VALA, IAAT…AGWV, FISE…GLKM, WMTV…GLAF, MATT…GVLF, and AGGL…LGLI.

This sequence belongs to the MntP (TC 9.B.29) family.

Its subcellular location is the cell inner membrane. Functionally, probably functions as a manganese efflux pump. This Neisseria meningitidis serogroup B (strain ATCC BAA-335 / MC58) protein is Putative manganese efflux pump MntP.